A 155-amino-acid polypeptide reads, in one-letter code: Transcription antitermination protein NusB (155 aa).

The protein belongs to the NusB family.

In terms of biological role, involved in transcription antitermination. Required for transcription of ribosomal RNA (rRNA) genes. Binds specifically to the boxA antiterminator sequence of the ribosomal RNA (rrn) operons. The sequence is that of Transcription antitermination protein NusB from Ralstonia pickettii (strain 12J).